The sequence spans 140 residues: Small ribosomal subunit protein eS17x (140 aa).

The protein belongs to the eukaryotic ribosomal protein eS17 family.

The chain is Small ribosomal subunit protein eS17x (RPS17C) from Arabidopsis thaliana (Mouse-ear cress).